The sequence spans 482 residues: MQFNVAIMTKRTFGVIGLAVMGENLALNVESRGFPIAVFNRSPNKTEKFMAERAVGKDIKAAYTVEEFVQLLERPRKILVMVKAGGPVDAVINELKPLLEEGDMIIDGGNSLYEDTERRTKDLEATGLGFVGMGVSGGEEGALLGPSLMPGGTPAAYKELEPILTKIAAQVEDPDNPACVTFIGPGGAGHYVKMVHNGIEYGDMQLIAEAYDILKNGLGLSNEQLHEVFGQWNQTDELNSFLIEISTDIFAKKDPETGGHLIDYILDAAGQKGTGRWTVMSGLELGVPIPTIYAAVNARVMSSLKEERVAASGQLSGPSKTFSGDVEAWIPKVRDALYCSKMCSYAQGMALIAKASQEFGYDVNLPEIARIWKGGCIIRAGFLDKIKKAFKDNPQLPNLLLAPEFKQSILDRQGPWREVLMLANEMGIAVPAFSSSLDYFDSYRRAVLPQNLTQAQRDYFGAHTYERTDKPRGEFFHTEWLD.

NADP(+) is bound by residues 17 to 22, 40 to 42, 82 to 84, and Asn110; these read GLAVMG, NRS, and VKA. Residues Asn110 and 136-138 contribute to the substrate site; that span reads SGG. Lys193 (proton acceptor) is an active-site residue. 196 to 197 is a binding site for substrate; it reads HN. The active-site Proton donor is the Glu200. Residues Tyr201, Lys272, Arg299, Arg457, and His463 each coordinate substrate.

Belongs to the 6-phosphogluconate dehydrogenase family. As to quaternary structure, homodimer.

It carries out the reaction 6-phospho-D-gluconate + NADP(+) = D-ribulose 5-phosphate + CO2 + NADPH. It functions in the pathway carbohydrate degradation; pentose phosphate pathway; D-ribulose 5-phosphate from D-glucose 6-phosphate (oxidative stage): step 3/3. In terms of biological role, catalyzes the oxidative decarboxylation of 6-phosphogluconate to ribulose 5-phosphate and CO(2), with concomitant reduction of NADP to NADPH. This Synechocystis sp. (strain ATCC 27184 / PCC 6803 / Kazusa) protein is 6-phosphogluconate dehydrogenase, decarboxylating (gnd).